The primary structure comprises 397 residues: S-layer protein B (397 aa).

The signal sequence occupies residues 1-24 (MVVKKTFVLSTLILISVVALVSTA). The stretch at 259–314 (INALNNEVSTLRSEISSLNSTIASLNKSLANANTQISNLQSEITTLNSEIGKLNST) forms a coiled coil. Residues 373–393 (GGIIAGIIGLIVAIVAIVLVM) traverse the membrane as a helical segment.

The protein belongs to the Sulfolobales SlaB family. The mushroom-shaped unit cells of the Sulfolobales' S-layers may consist of three SlaB subunits and six SlaA subunits.

The protein localises to the secreted. The protein resides in the cell wall. It localises to the S-layer. It is found in the cell membrane. In terms of biological role, S-layer small protein. May anchor the complex to the cell membrane. This is S-layer protein B from Saccharolobus solfataricus (strain ATCC 35092 / DSM 1617 / JCM 11322 / P2) (Sulfolobus solfataricus).